Here is a 178-residue protein sequence, read N- to C-terminus: Bifunctional protein PyrR (178 aa).

The short motif at V97–T109 is the PRPP-binding element.

It belongs to the purine/pyrimidine phosphoribosyltransferase family. PyrR subfamily.

The enzyme catalyses UMP + diphosphate = 5-phospho-alpha-D-ribose 1-diphosphate + uracil. Regulates the transcription of the pyrimidine nucleotide (pyr) operon in response to exogenous pyrimidines. In terms of biological role, also displays a weak uracil phosphoribosyltransferase activity which is not physiologically significant. The polypeptide is Bifunctional protein PyrR (Herpetosiphon aurantiacus (strain ATCC 23779 / DSM 785 / 114-95)).